The primary structure comprises 144 residues: Endoribonuclease YbeY (144 aa).

Residues His-108, His-112, and His-118 each contribute to the Zn(2+) site.

Belongs to the endoribonuclease YbeY family. Requires Zn(2+) as cofactor.

It localises to the cytoplasm. In terms of biological role, single strand-specific metallo-endoribonuclease involved in late-stage 70S ribosome quality control and in maturation of the 3' terminus of the 16S rRNA. The chain is Endoribonuclease YbeY from Phytoplasma australiense.